We begin with the raw amino-acid sequence, 297 residues long: SH2 domain-containing protein 6 (297 aa).

Disordered stretches follow at residues Met1–Arg61 and Met74–Ser93. Pro residues predominate over residues Pro36–Gln45. Residues Trp187–Thr295 enclose the SH2 domain.

The chain is SH2 domain-containing protein 6 (Sh2d6) from Mus musculus (Mouse).